The primary structure comprises 311 residues: tRNA-cytidine(32) 2-sulfurtransferase (311 aa).

Residues 47–52 (SGGKDS) carry the PP-loop motif motif. 3 residues coordinate [4Fe-4S] cluster: C122, C125, and C213.

This sequence belongs to the TtcA family. As to quaternary structure, homodimer. It depends on Mg(2+) as a cofactor. [4Fe-4S] cluster is required as a cofactor.

The protein resides in the cytoplasm. The enzyme catalyses cytidine(32) in tRNA + S-sulfanyl-L-cysteinyl-[cysteine desulfurase] + AH2 + ATP = 2-thiocytidine(32) in tRNA + L-cysteinyl-[cysteine desulfurase] + A + AMP + diphosphate + H(+). The protein operates within tRNA modification. Catalyzes the ATP-dependent 2-thiolation of cytidine in position 32 of tRNA, to form 2-thiocytidine (s(2)C32). The sulfur atoms are provided by the cysteine/cysteine desulfurase (IscS) system. In Escherichia coli (strain K12 / MC4100 / BW2952), this protein is tRNA-cytidine(32) 2-sulfurtransferase.